The sequence spans 364 residues: tRNA/tmRNA (uracil-C(5))-methyltransferase (364 aa).

Residues Gln188, Tyr216, Asn221, Glu237, and Asp297 each coordinate S-adenosyl-L-methionine. The active-site Nucleophile is Cys322. Catalysis depends on Glu356, which acts as the Proton acceptor.

It belongs to the class I-like SAM-binding methyltransferase superfamily. RNA M5U methyltransferase family. TrmA subfamily.

It carries out the reaction uridine(54) in tRNA + S-adenosyl-L-methionine = 5-methyluridine(54) in tRNA + S-adenosyl-L-homocysteine + H(+). It catalyses the reaction uridine(341) in tmRNA + S-adenosyl-L-methionine = 5-methyluridine(341) in tmRNA + S-adenosyl-L-homocysteine + H(+). Dual-specificity methyltransferase that catalyzes the formation of 5-methyluridine at position 54 (m5U54) in all tRNAs, and that of position 341 (m5U341) in tmRNA (transfer-mRNA). The sequence is that of tRNA/tmRNA (uracil-C(5))-methyltransferase from Colwellia psychrerythraea (strain 34H / ATCC BAA-681) (Vibrio psychroerythus).